A 124-amino-acid chain; its full sequence is Small ribosomal subunit protein uS12 (124 aa).

A compositionally biased stretch (basic residues) spans 11-20 (GRKRLKKKSK). The segment at 11-30 (GRKRLKKKSKSPALENNPQK) is disordered. Aspartate 89 is subject to 3-methylthioaspartic acid. Residues 105 to 124 (EGVANRRQSRSRYGAKKPKK) form a disordered region. Positions 111-124 (RQSRSRYGAKKPKK) are enriched in basic residues.

Belongs to the universal ribosomal protein uS12 family. In terms of assembly, part of the 30S ribosomal subunit. Contacts proteins S8 and S17. May interact with IF1 in the 30S initiation complex.

Functionally, with S4 and S5 plays an important role in translational accuracy. In terms of biological role, interacts with and stabilizes bases of the 16S rRNA that are involved in tRNA selection in the A site and with the mRNA backbone. Located at the interface of the 30S and 50S subunits, it traverses the body of the 30S subunit contacting proteins on the other side and probably holding the rRNA structure together. The combined cluster of proteins S8, S12 and S17 appears to hold together the shoulder and platform of the 30S subunit. The chain is Small ribosomal subunit protein uS12 from Kosmotoga olearia (strain ATCC BAA-1733 / DSM 21960 / TBF 19.5.1).